Consider the following 190-residue polypeptide: CDP-diacylglycerol--glycerol-3-phosphate 3-phosphatidyltransferase (190 aa).

Over 6–17 the chain is Cytoplasmic; that stretch reads GVFNIPMYLTLF. A helical transmembrane segment spans residues 18 to 42; the sequence is RIIMVPCFVAVFYWPIYWSPMLCTL. Residues 43 to 65 lie on the Periplasmic side of the membrane; that stretch reads IFFIAAITDWFDGFLARRWNQTS. Residues 66–86 traverse the membrane as a helical segment; that stretch reads RIGGFLDPIADKIMIITALIL. Residues 87–91 are Cytoplasmic-facing; it reads ISEHF. The helical transmembrane segment at 92–112 threads the bilayer; that stretch reads HVWWMTLPISSIIIREILISS. Residues 113–150 are Periplasmic-facing; that stretch reads LRECIARVDNKNNISVIWLSKVKTFAQMLALIALLCRL. A helical membrane pass occupies residues 151–173; sequence NEWTVIMGVISLYTAMLLTLWSM. Residues 174-186 are Cytoplasmic-facing; that stretch reads CYYVYSVSSILLQ.

This sequence belongs to the CDP-alcohol phosphatidyltransferase class-I family.

It is found in the cell inner membrane. It catalyses the reaction a CDP-1,2-diacyl-sn-glycerol + sn-glycerol 3-phosphate = a 1,2-diacyl-sn-glycero-3-phospho-(1'-sn-glycero-3'-phosphate) + CMP + H(+). It functions in the pathway phospholipid metabolism; phosphatidylglycerol biosynthesis; phosphatidylglycerol from CDP-diacylglycerol: step 1/2. Its function is as follows. Catalyzes the conversion of cytidine diphosphate diacylglycerol (CDP-DG) and glycerol 3-phosphate into phosphatidylglycerol. Essential for the synthesis of anionic phospholipids, thereby playing a role in balancing the ratio of zwitterionic and anionic phospholipids, which is thought to be important for normal membrane function. In Blochmanniella floridana, this protein is CDP-diacylglycerol--glycerol-3-phosphate 3-phosphatidyltransferase.